A 274-amino-acid chain; its full sequence is Putative ABC transporter ATP-binding protein MM_1037 (274 aa).

The ABC transporter domain occupies 2-235; the sequence is IRLENVSYCY…PSLKDLGLTP (234 aa). Residue 35–42 participates in ATP binding; it reads GRNGSGKS.

It belongs to the ABC transporter superfamily.

The protein localises to the cell membrane. In terms of biological role, probably part of an ABC transporter complex. Responsible for energy coupling to the transport system. The chain is Putative ABC transporter ATP-binding protein MM_1037 from Methanosarcina mazei (strain ATCC BAA-159 / DSM 3647 / Goe1 / Go1 / JCM 11833 / OCM 88) (Methanosarcina frisia).